The primary structure comprises 490 residues: MNTQQLAKLRTFVPEMRRVRQIHFVGIGGAGMGGIAEVLANEGYQISGSDLAPNAVTQQLTDLGAQIYFNHRPENISDASVVVVSSAIAADNPEIVAAKEVRIPVIQRAEMLAELMRFRHGIAIAGTHGKTTTTAMVASIYAEAGLDPTFVNGGLVKAAGVHARLGCSRYLIAEADESDASFLHLQPMVAIITNIEADHMDTYQGDFENLKQTFINFLHNLPFYGRAVMCIDDPVIRELLPRVGRQITTYGFSDDADLRITDYRQDGARGSFTFTRQEKADLRVELNAPGRHNALNAVAAIAVATEEGINDESILQAMLQFQGTGRRFDDLGHYDLVNVNGKTGEVMLVDDYGHHPTEVDATIKAARAGWPDKRLVMVFQPHRYTRTRDLYDDFANVLSGVDVLLMLDVYPAGEAPIPGADSRSLCRTIRGRGKVDPILVPDMETLPATLAQVLQDNDLVLMQGAGTVGKIARKLADSRLQPQPGEGRHG.

126–132 contributes to the ATP binding site; sequence GTHGKTT.

It belongs to the MurCDEF family.

The protein localises to the cytoplasm. It carries out the reaction UDP-N-acetyl-alpha-D-muramate + L-alanine + ATP = UDP-N-acetyl-alpha-D-muramoyl-L-alanine + ADP + phosphate + H(+). It participates in cell wall biogenesis; peptidoglycan biosynthesis. Cell wall formation. This Sodalis glossinidius (strain morsitans) protein is UDP-N-acetylmuramate--L-alanine ligase.